The sequence spans 497 residues: Lysine--tRNA ligase (497 aa).

Residues glutamate 409 and glutamate 416 each contribute to the Mg(2+) site.

It belongs to the class-II aminoacyl-tRNA synthetase family. In terms of assembly, homodimer. Mg(2+) is required as a cofactor.

Its subcellular location is the cytoplasm. It carries out the reaction tRNA(Lys) + L-lysine + ATP = L-lysyl-tRNA(Lys) + AMP + diphosphate. The polypeptide is Lysine--tRNA ligase (Streptococcus pyogenes serotype M49 (strain NZ131)).